The sequence spans 873 residues: Valine--tRNA ligase (873 aa).

The 'HIGH' region signature appears at 43-53 (PNVTGVLHMGH). The 'KMSKS' region signature appears at 532 to 536 (KMSKS). Lys535 contacts ATP. The stretch at 802–873 (LGNLINVEEE…IEESIAALTK (72 aa)) forms a coiled coil.

Belongs to the class-I aminoacyl-tRNA synthetase family. ValS type 1 subfamily. In terms of assembly, monomer.

The protein localises to the cytoplasm. The enzyme catalyses tRNA(Val) + L-valine + ATP = L-valyl-tRNA(Val) + AMP + diphosphate. Catalyzes the attachment of valine to tRNA(Val). As ValRS can inadvertently accommodate and process structurally similar amino acids such as threonine, to avoid such errors, it has a 'posttransfer' editing activity that hydrolyzes mischarged Thr-tRNA(Val) in a tRNA-dependent manner. This is Valine--tRNA ligase from Parabacteroides distasonis (strain ATCC 8503 / DSM 20701 / CIP 104284 / JCM 5825 / NCTC 11152).